The chain runs to 337 residues: Anthranilate phosphoribosyltransferase (337 aa).

5-phospho-alpha-D-ribose 1-diphosphate is bound by residues glycine 81, 84 to 85, threonine 89, 91 to 94, 109 to 117, and threonine 121; these read GD, NIST, and KHGNRALSS. Glycine 81 provides a ligand contact to anthranilate. Serine 93 contacts Mg(2+). Asparagine 112 lines the anthranilate pocket. Residue arginine 167 participates in anthranilate binding. Residues aspartate 225 and glutamate 226 each coordinate Mg(2+).

This sequence belongs to the anthranilate phosphoribosyltransferase family. Homodimer. Mg(2+) is required as a cofactor.

It carries out the reaction N-(5-phospho-beta-D-ribosyl)anthranilate + diphosphate = 5-phospho-alpha-D-ribose 1-diphosphate + anthranilate. It functions in the pathway amino-acid biosynthesis; L-tryptophan biosynthesis; L-tryptophan from chorismate: step 2/5. Its function is as follows. Catalyzes the transfer of the phosphoribosyl group of 5-phosphorylribose-1-pyrophosphate (PRPP) to anthranilate to yield N-(5'-phosphoribosyl)-anthranilate (PRA). This is Anthranilate phosphoribosyltransferase from Sinorhizobium medicae (strain WSM419) (Ensifer medicae).